Consider the following 305-residue polypeptide: UDP-N-acetylenolpyruvoylglucosamine reductase 2 (305 aa).

The 165-residue stretch at 33-197 folds into the FAD-binding PCMH-type domain; that stretch reads VGGKADVFVA…LEARFELEEG (165 aa). The active site involves arginine 176. Catalysis depends on serine 226, which acts as the Proton donor. Glutamate 296 is an active-site residue.

Belongs to the MurB family. It depends on FAD as a cofactor.

It localises to the cytoplasm. It carries out the reaction UDP-N-acetyl-alpha-D-muramate + NADP(+) = UDP-N-acetyl-3-O-(1-carboxyvinyl)-alpha-D-glucosamine + NADPH + H(+). It functions in the pathway cell wall biogenesis; peptidoglycan biosynthesis. Cell wall formation. In Bacillus cereus (strain ATCC 10987 / NRS 248), this protein is UDP-N-acetylenolpyruvoylglucosamine reductase 2.